A 209-amino-acid chain; its full sequence is Auxin-binding protein ABP19b (209 aa).

Residues 1–18 (MIFPIFFTFFLLLSTSHA) form the signal peptide. An intrachain disulfide couples Cys24 to Cys39. The Cupin type-1 domain occupies 53–199 (SGLGIAGNTT…TTLLDAPQIK (147 aa)). Asn60 carries N-linked (GlcNAc...) asparagine glycosylation. Mn(2+) is bound by residues His101, His103, Glu108, and His147.

Belongs to the germin family. In terms of assembly, interacts with ABP20.

The protein localises to the secreted. Its subcellular location is the extracellular space. It localises to the apoplast. The protein resides in the cell wall. In terms of biological role, probable receptor for the plant growth-promoting hormone auxin. The polypeptide is Auxin-binding protein ABP19b (ABP19B) (Prunus persica (Peach)).